A 570-amino-acid polypeptide reads, in one-letter code: Sulfite reductase [NADPH] hemoprotein beta-component (570 aa).

[4Fe-4S] cluster contacts are provided by C434, C440, C479, and C483. Residue C483 participates in siroheme binding.

The protein belongs to the nitrite and sulfite reductase 4Fe-4S domain family. In terms of assembly, alpha(8)-beta(8). The alpha component is a flavoprotein, the beta component is a hemoprotein. Siroheme serves as cofactor. The cofactor is [4Fe-4S] cluster.

The catalysed reaction is hydrogen sulfide + 3 NADP(+) + 3 H2O = sulfite + 3 NADPH + 4 H(+). It participates in sulfur metabolism; hydrogen sulfide biosynthesis; hydrogen sulfide from sulfite (NADPH route): step 1/1. Its function is as follows. Component of the sulfite reductase complex that catalyzes the 6-electron reduction of sulfite to sulfide. This is one of several activities required for the biosynthesis of L-cysteine from sulfate. This chain is Sulfite reductase [NADPH] hemoprotein beta-component, found in Shigella sonnei (strain Ss046).